Reading from the N-terminus, the 224-residue chain is Transcription factor HEC3 (224 aa).

Disordered regions lie at residues 22-42 (SSNNNNKNDDHHHQHNNDPIG) and 68-88 (SLTTTTLLSGDQEDDEDEEEP). Residues 28 to 37 (KNDDHHHQHN) show a composition bias toward basic and acidic residues. Positions 68–77 (SLTTTTLLSG) are enriched in low complexity. A compositionally biased stretch (acidic residues) spans 78-88 (DQEDDEDEEEP). One can recognise a bHLH domain in the interval 125 to 174 (ISDDPQSVAARHRRERISERIRILQRLVPGGTKMDTASMLDEAIRYVKFL). The segment at 183–224 (NNTGYTPPPPQDQASQAVTTSWVSPPPPPSFGRGGRGVGELI) is disordered. Polar residues predominate over residues 194-204 (DQASQAVTTSW). The span at 214-224 (GRGGRGVGELI) shows a compositional bias: gly residues.

Homodimer. Interacts with SPT. Gynoecium.

It localises to the nucleus. Its function is as follows. Required for the female reproductive tract development and fertility. This Arabidopsis thaliana (Mouse-ear cress) protein is Transcription factor HEC3 (HEC3).